The following is a 129-amino-acid chain: M-zodatoxin-Lt8a (129 aa).

An N-terminal signal peptide occupies residues 1–20 (MKYFVVALALVAAFACIAES). Residues 21–60 (KPAESEHELAEVEEENELADLEDAVWLEHLADLSDLEEAR) constitute a propeptide that is removed on maturation. The Processing quadruplet motif signature appears at 57-60 (EEAR).

This sequence belongs to the cationic peptide 06 (cytoinsectotoxin) family. In terms of processing, cleavage of the propeptide depends on the processing quadruplet motif (XXXR, with at least one of X being E). In terms of tissue distribution, expressed by the venom gland.

The protein resides in the secreted. In terms of biological role, insecticidal, cytolytic and antimicrobial peptide. Has insecticidal activity against the flesh fly S.carnaria, and against the cockroach N.cinerea. Has insecticidal activity against D.melanogaster. Has hemolytic activity against human erythrocytes (EC(50)=6 uM). Has cytolytic activity against insect Sf9 cells (EC(50)=1 uM) and human leukocytes (EC(50)=3 uM). Has antibacterial activity against the Gram-positive bacteria A.globiformis VKM Ac-1112 (MIC=0.5 uM), and B.subtilis VKM B-501 (MIC=0.6-0.9 uM), and against the Gram-negative bacteria E.coli C600 (MIC=0.5 uM), E.coli DH5alpha (MIC=0.9 uM), E.coli MH1 (MIC=0.5 uM), P.aeruginosa PAO1 (MIC=1.9 uM), and P.fluorescens VKM B-894 (MIC=3.8 uM). Lacks antimicrobial activity against the Gram-positive bacteria M.luteus and S.aureus, and against the Gram-negative bacterium S.marcescens. Forms voltage-dependent, ion-permeable channels in membranes. At high concentration causes cell membrane lysis. This Lachesana tarabaevi (Spider) protein is M-zodatoxin-Lt8a (cit 1-1).